Here is a 179-residue protein sequence, read N- to C-terminus: Large ribosomal subunit protein uL5 (179 aa).

Belongs to the universal ribosomal protein uL5 family. Part of the 50S ribosomal subunit; part of the 5S rRNA/L5/L18/L25 subcomplex. Contacts the 5S rRNA and the P site tRNA. Forms a bridge to the 30S subunit in the 70S ribosome.

In terms of biological role, this is one of the proteins that bind and probably mediate the attachment of the 5S RNA into the large ribosomal subunit, where it forms part of the central protuberance. In the 70S ribosome it contacts protein S13 of the 30S subunit (bridge B1b), connecting the 2 subunits; this bridge is implicated in subunit movement. Contacts the P site tRNA; the 5S rRNA and some of its associated proteins might help stabilize positioning of ribosome-bound tRNAs. The polypeptide is Large ribosomal subunit protein uL5 (Pseudoalteromonas translucida (strain TAC 125)).